A 245-amino-acid polypeptide reads, in one-letter code: Tetraspanin-6 (245 aa).

Residues 1–19 (MASPSRRLQTKPVITCFKS) are Cytoplasmic-facing. The helical transmembrane segment at 20–40 (VLLIYTFIFWITGVILLAVGI) threads the bilayer. Topologically, residues 41–59 (WGKVSLENYFSLLNEKATN) are extracellular. Residues 60 to 80 (VPFVLIATGTVIILLGTFGCF) traverse the membrane as a helical segment. Residues 81–93 (ATCRASAWMLKLY) are Cytoplasmic-facing. Residues 94-114 (AMFLTLVFLVELVAAIVGFVF) form a helical membrane-spanning segment. Residues 115-208 (RHEIKNSFKN…IKVMTIIESE (94 aa)) are Extracellular-facing. A glycan (N-linked (GlcNAc...) asparagine) is linked at asparagine 134. Residues 209–229 (MGVVAGISFGVACFQLIGIFL) traverse the membrane as a helical segment. Residues 230–245 (AYCLSRAITNNQYEIV) are Cytoplasmic-facing.

Belongs to the tetraspanin (TM4SF) family.

Its subcellular location is the membrane. This Homo sapiens (Human) protein is Tetraspanin-6 (TSPAN6).